The primary structure comprises 148 residues: Aspartate carbamoyltransferase regulatory chain (148 aa).

Cys-106, Cys-111, Cys-134, and Cys-137 together coordinate Zn(2+).

This sequence belongs to the PyrI family. Contains catalytic and regulatory chains. Zn(2+) is required as a cofactor.

In terms of biological role, involved in allosteric regulation of aspartate carbamoyltransferase. The sequence is that of Aspartate carbamoyltransferase regulatory chain from Methanococcus maripaludis (strain C6 / ATCC BAA-1332).